Here is a 765-residue protein sequence, read N- to C-terminus: Protein transport protein Sec23A (765 aa).

4 residues coordinate Zn(2+): Cys61, Cys66, Cys85, and Cys88. The Gelsolin-like repeat unit spans residues 632–718 (PEPVLLDSSS…EHGGSQARFL (87 aa)).

This sequence belongs to the SEC23/SEC24 family. SEC23 subfamily. In terms of assembly, COPII is composed of at least five proteins: the Sec23/24 complex, the Sec13/31 complex and Sar1.

It is found in the cytoplasmic vesicle. The protein localises to the COPII-coated vesicle membrane. Its subcellular location is the endoplasmic reticulum membrane. The protein resides in the cytoplasm. It localises to the cytosol. Its function is as follows. Component of the coat protein complex II (COPII) which promotes the formation of transport vesicles from the endoplasmic reticulum (ER). The coat has two main functions, the physical deformation of the endoplasmic reticulum membrane into vesicles and the selection of cargo molecules for their transport to the Golgi complex. The protein is Protein transport protein Sec23A of Danio rerio (Zebrafish).